The following is a 631-amino-acid chain: Probable basic-leucine zipper transcription factor F (631 aa).

A coiled-coil region spans residues 35-62 (KKNANVFNNFQQQQQQIQQQNKQSNGLI). Disordered regions lie at residues 46–117 (QQQQ…HNNI), 154–207 (LNNS…NNQF), and 264–406 (MLNV…ERHQ). 2 stretches are compositionally biased toward low complexity: residues 155–206 (NNSY…NNNQ) and 271–360 (NNAN…GSNN). Residues 328 to 366 (NNNNNNSNNISTQINNLNNNINNQNNQLNGSNNGKKKEE) are a coiled coil. A bZIP domain is found at 405 to 468 (HQKRQRRLVK…KLIREQLLYL (64 aa)). The segment at 407 to 427 (KRQRRLVKNREAAQLFRQRQK) is basic motif. The tract at residues 433 to 440 (LEKKVSDL) is leucine-zipper. The segment at 546–631 (QGNLLGTPIP…PPQQSTPNQR (86 aa)) is disordered. 2 stretches are compositionally biased toward low complexity: residues 563 to 609 (SNSG…PNSS) and 618 to 631 (PQNT…PNQR).

Belongs to the bZIP family.

Its subcellular location is the nucleus. Probable transcriptional regulator. The sequence is that of Probable basic-leucine zipper transcription factor F (bzpF) from Dictyostelium discoideum (Social amoeba).